We begin with the raw amino-acid sequence, 327 residues long: Ferrochelatase (327 aa).

Positions 187 and 265 each coordinate Fe cation.

This sequence belongs to the ferrochelatase family.

The protein localises to the cytoplasm. The enzyme catalyses heme b + 2 H(+) = protoporphyrin IX + Fe(2+). The protein operates within porphyrin-containing compound metabolism; protoheme biosynthesis; protoheme from protoporphyrin-IX: step 1/1. Its function is as follows. Catalyzes the ferrous insertion into protoporphyrin IX. This Chlamydia pneumoniae (Chlamydophila pneumoniae) protein is Ferrochelatase.